The following is a 579-amino-acid chain: Nuclear hormone receptor family member nhr-22 (579 aa).

The segment at residues S93–A173 is a DNA-binding region (nuclear receptor). 2 consecutive NR C4-type zinc fingers follow at residues C96–C117 and C133–C161. The span at L233–P242 shows a compositional bias: low complexity. The segment at L233–T256 is disordered. The region spanning E304–R577 is the NR LBD domain.

This sequence belongs to the nuclear hormone receptor family.

The protein localises to the nucleus. In terms of biological role, orphan nuclear receptor. In Caenorhabditis elegans, this protein is Nuclear hormone receptor family member nhr-22 (nhr-22).